Reading from the N-terminus, the 382-residue chain is Intermediate transcription factor 3 large subunit (382 aa).

It belongs to the poxviruses A23 family. Heterodimer of a 45 kDa and a 32 kDa subunit.

In terms of biological role, acts with RNA polymerase to initiate transcription from intermediate gene promoters. This Monkeypox virus (strain Zaire-96-I-16) (MPX) protein is Intermediate transcription factor 3 large subunit (VITF3L).